Here is a 414-residue protein sequence, read N- to C-terminus: CinA-like protein (414 aa).

Belongs to the CinA family.

In Citrifermentans bemidjiense (strain ATCC BAA-1014 / DSM 16622 / JCM 12645 / Bem) (Geobacter bemidjiensis), this protein is CinA-like protein.